Reading from the N-terminus, the 281-residue chain is tRNA N(3)-cytidine methyltransferase METTL8, mitochondrial (281 aa).

The transit peptide at 1–22 directs the protein to the mitochondrion; sequence MNVIWRSCICRLRQGKVPHRCQ. A Glycyl lysine isopeptide (Lys-Gly) (interchain with G-Cter in SUMO) cross-link involves residue K80. The S-adenosyl-L-methionine site is built by W89 and Y93. Positions 139-151 are enriched in polar residues; sequence RTQGTETHCQESF. Residues 139 to 180 form a disordered region; the sequence is RTQGTETHCQESFVSPEPGSRGRSAPDPDLEEYSKGPGKTEP. S-adenosyl-L-methionine-binding residues include G194, D220, and D246.

Belongs to the methyltransferase superfamily. METL family. In terms of assembly, interacts with EP300. As to expression, absent in embryonic lung but is induced in a fibroblast cell line by stretch. Expressed in undifferentiated progenitor cells, while its expression is inhibited by stretch. In terms of tissue distribution, absent in undifferentiated embryonic lung mesenchymal cells, but expression is induced by stretch. As to expression, expressed in mature adipose tissue.

It localises to the mitochondrion. Its subcellular location is the cytoplasm. It is found in the nucleus. The enzyme catalyses cytidine(32) in tRNA(Ser) + S-adenosyl-L-methionine = N(3)-methylcytidine(32) in tRNA(Ser) + S-adenosyl-L-homocysteine + H(+). The catalysed reaction is cytidine(32) in tRNA(Thr) + S-adenosyl-L-methionine = N(3)-methylcytidine(32) in tRNA(Thr) + S-adenosyl-L-homocysteine + H(+). It carries out the reaction a cytidine in mRNA + S-adenosyl-L-methionine = an N(3)-methylcytidine in mRNA + S-adenosyl-L-homocysteine + H(+). Mitochondrial S-adenosyl-L-methionine-dependent methyltransferase that mediates N(3)-methylcytidine modification of residue 32 of the tRNA anticodon loop of mitochondrial tRNA(Ser)(UCN) and tRNA(Thr). N(3)-methylcytidine methylation modification regulates mitochondrial translation efficiency and is required for activity of the respiratory chain. N(3)-methylcytidine methylation of mitochondrial tRNA(Ser)(UCN) requires the formation of N(6)-dimethylallyladenosine(37) (i6A37) by TRIT1 as prerequisite. May also mediate N(3)-methylcytidine modification of mRNAs. The existence of N(3)-methylcytidine modification on mRNAs is however unclear, and additional evidences are required to confirm the role of the N(3)-methylcytidine-specific mRNA methyltransferase activity of METTL8 in vivo. Its function is as follows. Overexpression in lung progenitor cells stimulates smooth muscle-specific gene expression and suppresses adipogenic gene expression. Functionally, stimulates adipogenesis. This Mus musculus (Mouse) protein is tRNA N(3)-cytidine methyltransferase METTL8, mitochondrial.